Here is a 161-residue protein sequence, read N- to C-terminus: Ribosome maturation factor RimP (161 aa).

This sequence belongs to the RimP family.

Its subcellular location is the cytoplasm. Required for maturation of 30S ribosomal subunits. The polypeptide is Ribosome maturation factor RimP (Rickettsia rickettsii (strain Iowa)).